We begin with the raw amino-acid sequence, 468 residues long: Intramembrane protease 2 (468 aa).

Topologically, residues 1–22 (MAEAATEIPPTASNVTVFTFEE) are lumenal. A glycan (N-linked (GlcNAc...) asparagine) is linked at N14. A helical membrane pass occupies residues 23–43 (QATSSLALYGMSILCIIIGSI). Topologically, residues 44-70 (RSAQYIRTNIDKKRLIEGSITMREARK) are cytoplasmic. A helical membrane pass occupies residues 71–91 (FPISASLVLFGLYLFFKPAAE). Residues 92–168 (RFLWVARVFQ…TNLPTIQKAE (77 aa)) are Lumenal-facing. 2 N-linked (GlcNAc...) asparagine glycosylation sites follow: N114 and N123. A helical transmembrane segment spans residues 169–189 (CMQLLTFLICFEGVNAFASLL). At 190–247 (KPFVTAFLKKMPLVPSFLRFNAPYLFSLKKGNKEMEEGDIEDAKKKETEYLFKIDFDR) the chain is on the cytoplasmic side. Residues 248–265 (YDIIALLMCSPILISHLL) form a helical membrane-spanning segment. Residues 266–267 (KR) lie on the Lumenal side of the membrane. A helical transmembrane segment spans residues 268 to 284 (HWITNNIIGVSFSILGI). The Cytoplasmic portion of the chain corresponds to 285 to 296 (ERLHLASFKAGS). The helical transmembrane segment at 297-317 (LLLVGLFFYDIFWVFGTDVMT) threads the bilayer. The active site involves D306. Topologically, residues 318–343 (SVAKGIDAPILLQFPQDIYRNGIMEA) are lumenal. Residues 344 to 364 (SKHSMLGLGDIVIPGIFIALL) form a helical membrane-spanning segment. D353 is an active-site residue. Over 365–388 (RRFDYRVVQTTAESKAPQGSLKGR) the chain is Cytoplasmic. A helical transmembrane segment spans residues 389-409 (YYFVVTVVAYMAGLFITMAVM). At 410-415 (HHFKAA) the chain is on the lumenal side. A helical transmembrane segment spans residues 416–436 (QPALLYLVPCCLFVPLLLAVI). Residues 417–419 (PAL) carry the PAL motif. At 437–468 (RGELSALWNYDESRHVDNEENRKKVDSGKKNN) the chain is on the cytoplasmic side.

This sequence belongs to the peptidase A22B family.

Its subcellular location is the membrane. The protein localises to the endoplasmic reticulum membrane. In terms of biological role, acts as intramembrane protease. In larvae, required for the complete shedding of the cuticle during molting, possibly by regulating cholesterol uptake via lrp-1. Involved in embryonic and larval development. This is Intramembrane protease 2 from Caenorhabditis elegans.